Consider the following 61-residue polypeptide: Small ribosomal subunit protein uS14B (61 aa).

Cys-24, Cys-27, Cys-40, and Cys-43 together coordinate Zn(2+).

It belongs to the universal ribosomal protein uS14 family. Zinc-binding uS14 subfamily. Part of the 30S ribosomal subunit. Contacts proteins S3 and S10. It depends on Zn(2+) as a cofactor.

In terms of biological role, binds 16S rRNA, required for the assembly of 30S particles and may also be responsible for determining the conformation of the 16S rRNA at the A site. The chain is Small ribosomal subunit protein uS14B from Bacillus velezensis (strain DSM 23117 / BGSC 10A6 / LMG 26770 / FZB42) (Bacillus amyloliquefaciens subsp. plantarum).